Consider the following 475-residue polypeptide: UDP-glycosyltransferase 76E1 (475 aa).

The active-site Proton acceptor is the His-19. His-19 lines the an anthocyanidin pocket. Asp-109 (charge relay) is an active-site residue. Positions 131, 329, 331, 346, 349, 350, 351, and 354 each coordinate UDP-alpha-D-glucose. Ala-369 lines the an anthocyanidin pocket. 2 residues coordinate UDP-alpha-D-glucose: Asp-370 and Gln-371.

This sequence belongs to the UDP-glycosyltransferase family. Expressed in flowers and fruits.

The protein localises to the cytoplasm. The protein resides in the nucleus. It catalyses the reaction 2-cis-(+)-abscisate + UDP-alpha-D-glucose = beta-D-glucopyranosyl cis-(+)-abscisate + UDP. Functionally, glucosyltransferase acting on abscisic acid (ABA) but not on auxin (IAA). The polypeptide is UDP-glycosyltransferase 76E1 (Solanum lycopersicum (Tomato)).